The following is a 126-amino-acid chain: MASASAQPAALSAEQAKVVLAEVIQAFSAPENAVRMDEARDNACNDMGKMLQFVLPVATQIQQEVIKAYGFSCDGEGVLKFARLVKSYEAQDPEIASLSGKLKALFLPPMTLPPHGPASGSSVAAS.

Position 2 is an N-acetylalanine (alanine 2).

This sequence belongs to the UPF0456 family. As to expression, ubiquitously expressed, with higher expression in lung.

The protein localises to the cytoplasm. In terms of biological role, in brain, may be required for corpus callosum development. In Mus musculus (Mouse), this protein is Protein C10 (Grcc10).